The chain runs to 485 residues: Glutathione gamma-glutamylcysteinyltransferase 1 (485 aa).

The Peptidase C83 domain maps to 1-221 (MAMASLYRRS…GFMLISRPHR (221 aa)). Active-site residues include C56, H162, and D180.

It belongs to the phytochelatin synthase family. As to expression, expressed in roots and shoots.

It catalyses the reaction [Glu(-Cys)](n)-Gly + glutathione + H(+) = [Glu(-Cys)](n+1)-Gly + glycine. Requires cadmium for activity. Also activated in vitro or in heterologous system by Ag(+), Hg(+), Zn(2+), Cu(2+), Fe(2+) or Fe(3+) ions, but not by Co(2+) or Ni(2+) ions. Involved in the synthesis of phytochelatins (PC) and homophytochelatins (hPC), the heavy-metal-binding peptides of plants. Also involved in glutathione-conjugates degradation. This chain is Glutathione gamma-glutamylcysteinyltransferase 1 (PCS1), found in Arabidopsis thaliana (Mouse-ear cress).